A 302-amino-acid chain; its full sequence is Deoxyribonuclease-1-like 1 (302 aa).

The N-terminal stretch at 1-18 is a signal peptide; that stretch reads MHYPTALLFLILVNGAQA. Active-site residues include Glu-97 and His-148. An intrachain disulfide couples Cys-187 to Cys-224. Residue Asn-261 is glycosylated (N-linked (GlcNAc...) asparagine).

The protein belongs to the DNase I family.

It is found in the endoplasmic reticulum. The sequence is that of Deoxyribonuclease-1-like 1 (DNASE1L1) from Chlorocebus aethiops (Green monkey).